The sequence spans 138 residues: MRTLWIVAVLLLGVEGSLVQFETLIMKIAGRSGLLWYSAYGCYCGWGGHGLPQDATDRCCFVHDCCYGKATDCNPKTVSYTYSVKNGEIICEDDDPCKRQVCECDRVAAVCFRDNIPSYNNNYKRFPAENCREEPEPC.

Residues 1-16 (MRTLWIVAVLLLGVEG) form the signal peptide. 7 cysteine pairs are disulfide-bonded: cysteine 42/cysteine 131, cysteine 44/cysteine 60, cysteine 59/cysteine 111, cysteine 65/cysteine 138, cysteine 66/cysteine 104, cysteine 73/cysteine 97, and cysteine 91/cysteine 102. Ca(2+)-binding residues include tyrosine 43, glycine 45, and glycine 47. Histidine 63 is a catalytic residue. Aspartate 64 contributes to the Ca(2+) binding site. Aspartate 105 is a catalytic residue.

It belongs to the phospholipase A2 family. Group II subfamily. D49 sub-subfamily. Requires Ca(2+) as cofactor. As to expression, expressed by the venom gland.

Its subcellular location is the secreted. The enzyme catalyses a 1,2-diacyl-sn-glycero-3-phosphocholine + H2O = a 1-acyl-sn-glycero-3-phosphocholine + a fatty acid + H(+). In terms of biological role, snake venom phospholipase A2 (PLA2) that shows very low inhibition of ADP-induced platelet aggregation in platelet-rich plasma of human, rabbit and guinea pig. In vivo, shows efficient edema-inducing activities in rat paws. PLA2 catalyzes the calcium-dependent hydrolysis of the 2-acyl groups in 3-sn-phosphoglycerides. The chain is Acidic phospholipase A2 Cvv-E6h from Crotalus viridis viridis (Prairie rattlesnake).